The sequence spans 251 residues: Tropomyosin-2 (251 aa).

A coiled-coil region spans residues 1–251 (MSGEEKLGKL…DTVADEPDDE (251 aa)).

Belongs to the tropomyosin family. Homodimer. In terms of tissue distribution, striated muscle specific.

In Podocoryna carnea (Hydrozoan), this protein is Tropomyosin-2 (TPM2).